The following is a 100-amino-acid chain: Large ribosomal subunit protein uL23 (100 aa).

The protein belongs to the universal ribosomal protein uL23 family. Part of the 50S ribosomal subunit. Contacts protein L29, and trigger factor when it is bound to the ribosome.

Functionally, one of the early assembly proteins it binds 23S rRNA. One of the proteins that surrounds the polypeptide exit tunnel on the outside of the ribosome. Forms the main docking site for trigger factor binding to the ribosome. The protein is Large ribosomal subunit protein uL23 of Prochlorococcus marinus (strain MIT 9313).